A 347-amino-acid chain; its full sequence is Guanine nucleotide-binding protein subunit beta (347 aa).

WD repeat units follow at residues 60-90 (GHLAKIYAMHWAEDNVHLVSASQDGKLLVWD), 102-132 (LRSSWVMTCAYSPTANFVACGGLDNICSIYN), 148-177 (SHTGYLSCCRFLNDRQIVTSSGDMTCILWD), 189-219 (DHNGDVMSVSVSPDKNYFISGACDATAKLWD), 231-261 (GHEADINAVQYFPNGLSFGTGSDDASCRLFD), 275-305 (NILCGITSVGFSFSGRFLFAGYDDFTCNVWD), and 317-347 (GHGNRVSCLGVPTDGMALCTGSWDSLLKIWA).

This sequence belongs to the WD repeat G protein beta family. In terms of assembly, g proteins are composed of 3 units, alpha, beta and gamma. Interacts with gpgA, and this requires phlp1.

The protein resides in the cytoplasm. It is found in the cell membrane. Functionally, guanine nucleotide-binding proteins (G proteins) are involved as a modulator or transducer in various transmembrane signaling systems. The beta and gamma chains are required for the GTPase activity, for replacement of GDP by GTP, and for G protein-effector interaction. Required for normal chemotaxis in response to cAMP and for aggregation during scorocarp development. The polypeptide is Guanine nucleotide-binding protein subunit beta (gpbA) (Dictyostelium discoideum (Social amoeba)).